We begin with the raw amino-acid sequence, 276 residues long: Cerberus (276 aa).

The N-terminal stretch at 1–20 (MLLCVLKIYIIFCLVNDGAG) is a signal peptide. N-linked (GlcNAc...) asparagine glycans are attached at residues N103, N118, and N160. Intrachain disulfides connect C175-C221, C189-C235, C199-C251, and C203-C253. The region spanning 175–259 (CKTLPFTQNI…ECACEAHKNN (85 aa)) is the CTCK domain. N234 is a glycosylation site (N-linked (GlcNAc...) asparagine).

The protein belongs to the DAN family. In terms of assembly, the long chain interacts with nodal/nr-1, bmp4 and wnt8, thereby inhibiting their function. The short chain interacts with nodal/nr-1 but not bmp4 or wnt8. Expressed in the anterior endomesoderm of the early gastrula with expression expanded laterally around the margin at the endoderm/mesoderm boundary.

The protein resides in the secreted. Functionally, inhibits wnt, nodal/nr-1 and bmp signaling in the embryo to promote head formation and anterior neural induction. Within the endoderm, acts as an essential mediator of nodal/nr-1-induced cardiogenesis in the overlying mesoderm. The protein is Cerberus of Xenopus tropicalis (Western clawed frog).